A 294-amino-acid polypeptide reads, in one-letter code: Transcription factor nsy-7 (294 aa).

Disordered stretches follow at residues 43–119 (CNLR…TPDL) and 167–191 (LRLP…DSPL). 2 stretches are compositionally biased toward polar residues: residues 52–63 (DQPTTSSNSVKE) and 81–115 (RRQS…SNDP). Positions 192–232 (QTRMKGWQREYIKEVIKDSHYPTEEELRDIEQKCDLSRKQI) form a DNA-binding region, homeobox; atypical. The interval 238 to 274 (KRLTNPNRKPRVNHHDEKRKEQEERDSLADPDDDMIN) is disordered. Positions 250–265 (NHHDEKRKEQEERDSL) are enriched in basic and acidic residues.

In terms of tissue distribution, expressed widely, including gut, the amphid sheath glial cells, and head and tail neurons including AWC, ASE, and ASH. Expressed in AWC (ON) olfactory neuron but not AWC (OFF).

The protein resides in the nucleus. Functionally, transcriptional regulator which binds DNA consensus sequence 5'-CCTTAAC-3'. Plays a role in establishing and maintaining asymmetric cell fates in chemosensory AWC neurons during larval neuronal development. This is achieved by repressing the expression of multiple AWC (OFF) genes, including srsx-3 and hlh-11 in the AWC (ON) neuron. Activates expression of sox-2 in the AWC (ON) neuron. This chain is Transcription factor nsy-7, found in Caenorhabditis elegans.